Here is a 48-residue protein sequence, read N- to C-terminus: uncharacterized protein (48 aa).

A helical transmembrane segment spans residues 6–26 (IILLMIVCLVVSVLVVVWIIL).

It localises to the host membrane. This is an uncharacterized protein from Spiroplasma melliferum (SpV4).